We begin with the raw amino-acid sequence, 205 residues long: Small ribosomal subunit protein uS4 (205 aa).

The disordered stretch occupies residues 18–46; sequence NIWGRPKSPVNRREYGPGQHGQRRKGKLS. Residues 94-157 enclose the S4 RNA-binding domain; it reads RRLDTVVYRA…KQLAFVLEAS (64 aa).

The protein belongs to the universal ribosomal protein uS4 family. Part of the 30S ribosomal subunit. Contacts protein S5. The interaction surface between S4 and S5 is involved in control of translational fidelity.

Functionally, one of the primary rRNA binding proteins, it binds directly to 16S rRNA where it nucleates assembly of the body of the 30S subunit. Its function is as follows. With S5 and S12 plays an important role in translational accuracy. This Rhodopseudomonas palustris (strain HaA2) protein is Small ribosomal subunit protein uS4.